We begin with the raw amino-acid sequence, 397 residues long: uncharacterized protein (397 aa).

4 helical membrane-spanning segments follow: residues 142–162, 191–211, 242–258, and 260–280; these read WETIGTFTVSGLLVAVSVGIA, SQLLFEHPFMALGLIFGSVVL, ALTGMVSLLALSGTYFL, and APWLDPFFGCLVSIVVFSAGF.

It belongs to the cation diffusion facilitator (CDF) transporter (TC 2.A.4) family. SLC30A subfamily.

The protein localises to the membrane. This is an uncharacterized protein from Schizosaccharomyces pombe (strain 972 / ATCC 24843) (Fission yeast).